We begin with the raw amino-acid sequence, 608 residues long: MEMESAAASTRFHQPHMERKMSAMACEIFNELRLEGKLCDVVIKVNGFEFSAHKNILCSCSSYFRALFTSGWNNTEKKVYNIPGISPDMMKLIIEYAYTRTVPITPDNVEKLLAAADQFNIMGIVRGCCEFLKSELCLDNCIGICKFTDYYYCPELRQKAYMFILHNFEEMVKVSAEFLELSVTELKDIIEKDELNVKQEDAVFEAILKWISHDPQNRKQHISILLPKVRLALMHAEYFMNNVKMNDYVKDSEECKPVIINALKAMYDLNMNGPSNSDFTNPLTRPRLPYAILFAIGGWSGGSPTNAIEAYDARADRWVNVTCEEESPRAYHGAAYLKGYVYIIGGFDSVDYFNSVKRFDPVKKTWHQVAPMHSRRCYVSVTVLGNFIYAMGGFDGYVRLNTAERYEPETNQWTLIAPMHEQRSDASATTLYGKVYICGGFNGNECLFTAEVYNTESNQWTVIAPMRSRRSGIGVIAYGEHVYAVGGFDGANRLRSAEAYSPVANTWRTIPTMFNPRSNFGIEVVDDLLFVVGGFNGFTTTFNVECYDEKTDEWYDAHDMSIYRSALSCCVVPGLANVEEYAARRDNFPGLALRDEVKYSASTSTLPV.

One can recognise a BTB domain in the interval 39 to 106 (CDVVIKVNGF…AYTRTVPITP (68 aa)). Kelch repeat units follow at residues 292–339 (ILFA…YLKG), 340–386 (YVYI…VLGN), 388–433 (IYAM…TLYG), 434–480 (KVYI…AYGE), 481–527 (HVYA…VVDD), and 529–574 (LFVV…VVPG). S501 is subject to Phosphoserine.

As to quaternary structure, self-associates. Interacts with CUL3; indicative for the participation in an E3 ubiquitin ligase complex.

The protein localises to the cytoplasm. Its pathway is protein modification; protein ubiquitination. May be a substrate-specific adapter of a CUL3-based E3 ubiquitin-protein ligase complex which mediates the ubiquitination and subsequent proteasomal degradation of target proteins during spermatogenesis. This chain is Kelch-like protein 10 (KLHL10), found in Homo sapiens (Human).